We begin with the raw amino-acid sequence, 226 residues long: UPF0319 protein SO_1816 (226 aa).

Positions 1 to 21 (MKSLLPISSLLVLLGSASVSA) are cleaved as a signal peptide.

This sequence belongs to the UPF0319 family.

The polypeptide is UPF0319 protein SO_1816 (Shewanella oneidensis (strain ATCC 700550 / JCM 31522 / CIP 106686 / LMG 19005 / NCIMB 14063 / MR-1)).